Here is an 831-residue protein sequence, read N- to C-terminus: Phenylalanine--tRNA ligase beta subunit (831 aa).

A tRNA-binding domain is found at Gly-44–Ala-155. One can recognise a B5 domain in the interval Trp-414–Ser-489. Mg(2+)-binding residues include Asp-467, Asp-473, Glu-476, and Glu-477. The FDX-ACB domain maps to Ser-737 to Arg-830.

Belongs to the phenylalanyl-tRNA synthetase beta subunit family. Type 1 subfamily. As to quaternary structure, tetramer of two alpha and two beta subunits. Requires Mg(2+) as cofactor.

Its subcellular location is the cytoplasm. The enzyme catalyses tRNA(Phe) + L-phenylalanine + ATP = L-phenylalanyl-tRNA(Phe) + AMP + diphosphate + H(+). This Mycobacterium bovis (strain ATCC BAA-935 / AF2122/97) protein is Phenylalanine--tRNA ligase beta subunit.